A 248-amino-acid chain; its full sequence is Flavodoxin/ferredoxin--NADP reductase (248 aa).

Positions 2 to 101 constitute an FAD-binding FR-type domain; it reads ADWVTGKVTK…SEAAGFFVLD (100 aa). Asp17 contacts NADP(+). Residues 50–53, Tyr66, 74–76, and Thr116 contribute to the FAD site; these read RAYS and KLS. Residues 143-144, 173-174, Arg184, 214-216, and Asp220 contribute to the NADP(+) site; these read AR, SR, and NPQ. 247 to 248 contributes to the FAD binding site; that stretch reads YW.

Belongs to the ferredoxin--NADP reductase type 1 family. In terms of assembly, monomer. FAD serves as cofactor.

It localises to the cytoplasm. It catalyses the reaction 2 reduced [2Fe-2S]-[ferredoxin] + NADP(+) + H(+) = 2 oxidized [2Fe-2S]-[ferredoxin] + NADPH. The enzyme catalyses reduced [flavodoxin] + NADP(+) = oxidized [flavodoxin] + NADPH + 2 H(+). In terms of biological role, transports electrons between flavodoxin or ferredoxin and NADPH. Reduces flavodoxin 1, flavodoxin 2 and ferredoxin, ferredoxin being the kinetically and thermodynamically preferred partner. Required for the activation of several enzymes such as pyruvate formate-lyase, anaerobic ribonucleotide reductase and cobalamin-dependent methionine synthase. This chain is Flavodoxin/ferredoxin--NADP reductase, found in Escherichia coli (strain K12).